The following is a 72-amino-acid chain: Translation initiation factor IF-1 (72 aa).

An S1-like domain is found at 1–72 (MAKQDVIELE…SRGRITYRYK (72 aa)).

It belongs to the IF-1 family. As to quaternary structure, component of the 30S ribosomal translation pre-initiation complex which assembles on the 30S ribosome in the order IF-2 and IF-3, IF-1 and N-formylmethionyl-tRNA(fMet); mRNA recruitment can occur at any time during PIC assembly.

It is found in the cytoplasm. One of the essential components for the initiation of protein synthesis. Stabilizes the binding of IF-2 and IF-3 on the 30S subunit to which N-formylmethionyl-tRNA(fMet) subsequently binds. Helps modulate mRNA selection, yielding the 30S pre-initiation complex (PIC). Upon addition of the 50S ribosomal subunit IF-1, IF-2 and IF-3 are released leaving the mature 70S translation initiation complex. The chain is Translation initiation factor IF-1 from Staphylococcus epidermidis (strain ATCC 35984 / DSM 28319 / BCRC 17069 / CCUG 31568 / BM 3577 / RP62A).